The chain runs to 204 residues: N-(5'-phosphoribosyl)anthranilate isomerase (204 aa).

It belongs to the TrpF family.

The catalysed reaction is N-(5-phospho-beta-D-ribosyl)anthranilate = 1-(2-carboxyphenylamino)-1-deoxy-D-ribulose 5-phosphate. It participates in amino-acid biosynthesis; L-tryptophan biosynthesis; L-tryptophan from chorismate: step 3/5. This is N-(5'-phosphoribosyl)anthranilate isomerase from Bacillus anthracis (strain A0248).